The primary structure comprises 97 residues: UPF0235 protein APP7_1431 (97 aa).

Belongs to the UPF0235 family.

This Actinobacillus pleuropneumoniae serotype 7 (strain AP76) protein is UPF0235 protein APP7_1431.